Here is a 160-residue protein sequence, read N- to C-terminus: MLRHLPSRLPVKMWGRTLEKQSWRDSSQTPPPCLIRRLDHIVMTVKSIKDTTMFYSKILGMEVMTFKEDRKALCFGDQKFNLHEVGKEFEPKAAHPVPGSLDICLITEVPLEEMIQHLKACDVPIEEGPVPRTGAKGPIMSIYFRDPDRNLIEVSNYISS.

One can recognise a VOC domain in the interval 37 to 157 (RLDHIVMTVK…DRNLIEVSNY (121 aa)).

Belongs to the glyoxalase I family.

The sequence is that of Glyoxalase domain-containing protein 5 (GLOD5) from Homo sapiens (Human).